The sequence spans 361 residues: sn-glycerol-3-phosphate import ATP-binding protein UgpC (361 aa).

In terms of domain architecture, ABC transporter spans 4–235; that stretch reads LSLKGVRKSY…PATVFVAGFI (232 aa). Residue 37 to 44 coordinates ATP; it reads GPSGCGKS.

It belongs to the ABC transporter superfamily. sn-glycerol-3-phosphate importer (TC 3.A.1.1.3) family. The complex is composed of two ATP-binding proteins (UgpC), two transmembrane proteins (UgpA and UgpE) and a solute-binding protein (UgpB).

The protein localises to the cell inner membrane. It catalyses the reaction sn-glycerol 3-phosphate(out) + ATP + H2O = sn-glycerol 3-phosphate(in) + ADP + phosphate + H(+). Its function is as follows. Part of the ABC transporter complex UgpBAEC involved in sn-glycerol-3-phosphate (G3P) import. Responsible for energy coupling to the transport system. This Burkholderia lata (strain ATCC 17760 / DSM 23089 / LMG 22485 / NCIMB 9086 / R18194 / 383) protein is sn-glycerol-3-phosphate import ATP-binding protein UgpC.